The sequence spans 146 residues: Putative pre-16S rRNA nuclease (146 aa).

It belongs to the YqgF nuclease family.

Its subcellular location is the cytoplasm. Functionally, could be a nuclease involved in processing of the 5'-end of pre-16S rRNA. This chain is Putative pre-16S rRNA nuclease, found in Methylobacillus flagellatus (strain ATCC 51484 / DSM 6875 / VKM B-1610 / KT).